Here is a 244-residue protein sequence, read N- to C-terminus: Securin-like protein (244 aa).

The interval 31 to 53 (ELEKTPSRGGLGLVVNSSKTPGG) is disordered.

As to quaternary structure, forms a complex (via C-terminus) with separase sep-1. Interaction with ify-1 stabilizes sep-1. Also maintains the complex in the cytoplasm during interphase and recruits it to chromosomes during the first meiotic division. Interacts with E3 ubiquitin-protein ligase etc-1. Ubiquitinated by etc-1 likely at the onset of anaphase, resulting in its degradation. In terms of tissue distribution, expressed in germ cells including oocytes.

It localises to the cytoplasm. The protein resides in the chromosome. Its subcellular location is the cytoskeleton. The protein localises to the spindle. Functionally, acts as a chaperone and as an inhibitor for separase sep-1. Plays an essential role in maintaining chromosome cohesion prior to meiotic and mitotic anaphase, in cytokinesis and in organizing the spindle and the centrosome. Ubiquitination-dependent degradation at the onset of anaphase is likely to activate sep-1 resulting in the proteolysis of the cohesin complex and the subsequent segregation of the chromosomes. Also required for cortical granule exocytosis. In Caenorhabditis elegans, this protein is Securin-like protein.